Here is a 367-residue protein sequence, read N- to C-terminus: Phosphoribosylaminoimidazole-succinocarboxamide synthase (367 aa).

It belongs to the SAICAR synthetase family.

The enzyme catalyses 5-amino-1-(5-phospho-D-ribosyl)imidazole-4-carboxylate + L-aspartate + ATP = (2S)-2-[5-amino-1-(5-phospho-beta-D-ribosyl)imidazole-4-carboxamido]succinate + ADP + phosphate + 2 H(+). It participates in purine metabolism; IMP biosynthesis via de novo pathway; 5-amino-1-(5-phospho-D-ribosyl)imidazole-4-carboxamide from 5-amino-1-(5-phospho-D-ribosyl)imidazole-4-carboxylate: step 1/2. This is Phosphoribosylaminoimidazole-succinocarboxamide synthase from Aliivibrio fischeri (strain ATCC 700601 / ES114) (Vibrio fischeri).